The chain runs to 859 residues: Leucine--tRNA ligase (859 aa).

The 'HIGH' region signature appears at 42-52 (PYPSGRLHMGH). The short motif at 618-622 (KMSKS) is the 'KMSKS' region element. K621 is an ATP binding site.

Belongs to the class-I aminoacyl-tRNA synthetase family.

The protein localises to the cytoplasm. The enzyme catalyses tRNA(Leu) + L-leucine + ATP = L-leucyl-tRNA(Leu) + AMP + diphosphate. This Shewanella baltica (strain OS223) protein is Leucine--tRNA ligase.